Here is a 463-residue protein sequence, read N- to C-terminus: Glycine--tRNA ligase (463 aa).

Residues Arg-98 and Glu-174 each contribute to the substrate site. Residues Arg-206–Glu-208, Phe-216–Phe-221, Glu-290–Leu-291, and Gly-334–Arg-337 contribute to the ATP site. Residue Phe-221 to Glu-225 coordinates substrate. Glu-330–Gly-334 contacts substrate.

The protein belongs to the class-II aminoacyl-tRNA synthetase family. In terms of assembly, homodimer.

It localises to the cytoplasm. The enzyme catalyses tRNA(Gly) + glycine + ATP = glycyl-tRNA(Gly) + AMP + diphosphate. In terms of biological role, catalyzes the attachment of glycine to tRNA(Gly). The sequence is that of Glycine--tRNA ligase from Staphylococcus aureus (strain Mu50 / ATCC 700699).